Consider the following 269-residue polypeptide: Putative imidazole glycerol phosphate synthase subunit hisF2 (269 aa).

The active site involves D133.

The protein belongs to the HisA/HisF family. In terms of assembly, heterodimer of HisH and HisF.

The protein localises to the cytoplasm. It carries out the reaction 5-[(5-phospho-1-deoxy-D-ribulos-1-ylimino)methylamino]-1-(5-phospho-beta-D-ribosyl)imidazole-4-carboxamide + L-glutamine = D-erythro-1-(imidazol-4-yl)glycerol 3-phosphate + 5-amino-1-(5-phospho-beta-D-ribosyl)imidazole-4-carboxamide + L-glutamate + H(+). It functions in the pathway amino-acid biosynthesis; L-histidine biosynthesis; L-histidine from 5-phospho-alpha-D-ribose 1-diphosphate: step 5/9. Its function is as follows. IGPS catalyzes the conversion of PRFAR and glutamine to IGP, AICAR and glutamate. The HisF subunit catalyzes the cyclization activity that produces IGP and AICAR from PRFAR using the ammonia provided by the HisH subunit. The sequence is that of Putative imidazole glycerol phosphate synthase subunit hisF2 (hisF2) from Parasynechococcus marenigrum (strain WH8102).